Consider the following 63-residue polypeptide: MANPKAKMSKSRRDKRRAQFNARTKAATTVVCPNCGEPTLPHRACRHCGHYRGRAVVTKSANS.

Positions 1–22 (MANPKAKMSKSRRDKRRAQFNA) are disordered. Positions 7–18 (KMSKSRRDKRRA) are enriched in basic residues.

Belongs to the bacterial ribosomal protein bL32 family.

This Chlorobium limicola (strain DSM 245 / NBRC 103803 / 6330) protein is Large ribosomal subunit protein bL32.